Reading from the N-terminus, the 258-residue chain is Aspartate/glutamate leucyltransferase (258 aa).

It belongs to the R-transferase family. Bpt subfamily.

Its subcellular location is the cytoplasm. The enzyme catalyses N-terminal L-glutamyl-[protein] + L-leucyl-tRNA(Leu) = N-terminal L-leucyl-L-glutamyl-[protein] + tRNA(Leu) + H(+). It carries out the reaction N-terminal L-aspartyl-[protein] + L-leucyl-tRNA(Leu) = N-terminal L-leucyl-L-aspartyl-[protein] + tRNA(Leu) + H(+). Functionally, functions in the N-end rule pathway of protein degradation where it conjugates Leu from its aminoacyl-tRNA to the N-termini of proteins containing an N-terminal aspartate or glutamate. The sequence is that of Aspartate/glutamate leucyltransferase from Rhodopseudomonas palustris (strain BisA53).